The primary structure comprises 1097 residues: RecBCD enzyme subunit RecC (1097 aa).

It belongs to the RecC family. In terms of assembly, heterotrimer of RecB, RecC and RecD. All subunits contribute to DNA-binding.

Functionally, a helicase/nuclease that prepares dsDNA breaks (DSB) for recombinational DNA repair. Binds to DSBs and unwinds DNA via a highly rapid and processive ATP-dependent bidirectional helicase activity. Holoenzyme degrades any linearized DNA that is unable to undergo homologous recombination. In the holoenzyme this subunit recognizes the wild-type Chi sequence, and when added to isolated RecB increases its ATP-dependent helicase processivity. Unlike the case in E.coli, suppresses RecA-dependent homologous recombination, is instead required for single-strand annealing pathway repair of DSB. This Mycobacterium tuberculosis (strain CDC 1551 / Oshkosh) protein is RecBCD enzyme subunit RecC.